A 546-amino-acid polypeptide reads, in one-letter code: MRYIVVTGGVMSGLGKGITAASIGRLLMNKGYRVTAIKIDPYINIDAGLMSPFQHGEVYVLKDGGEVDLDLGNYERFLDIELTRDHNITTGKVYSTVIEKERRGEYLGKTVQIIPHITDEIKRRIRQVSRTGGSEICLIEVGGTVGDIESMPFLEAMRQLKYEESGNIFFVHVTLAPMTSDGEQKTKPTQHSVKEMRELGLQPDMIVVRCKKPLLPETKAKIAHFCDVPIEAVISGHDSDDIYRVPLQLEAEGLTKYIMKAMRLFPLEERRDWYDLVQRMDSIREKVSMALVGKYTSGSQCTDPMKDAYLSIREALKHAGIEAGVMPEISWIDAEDLERIQPEKVLRDFDGILVPGGFGARGTEGKMNAIRYAREKGIPYLGICFGMQLAVIEFARNVCGLEGASSTEFGETPHPVIALLPEQEKVRQMGATMRLGNYPAHLIEGTLAHRIYGTTEIVERHRHRYEVNPAYIEVLEKNGLLFSGRNGDLMEIMEIPGHPFFFACQFHPEMRSRPGRPSPPFLAFVEAMKAQRLRRTGSTYTLELTA.

Residues Met1–Leu264 form an amidoligase domain region. Ser12 provides a ligand contact to CTP. Residue Ser12 coordinates UTP. ATP is bound by residues Gly13 to Ile18 and Asp70. Residues Asp70 and Glu140 each contribute to the Mg(2+) site. CTP contacts are provided by residues Asp147–Glu149, Lys185–Gln190, and Lys221. Residues Lys185 to Gln190 and Lys221 each bind UTP. In terms of domain architecture, Glutamine amidotransferase type-1 spans Gly298–Arg534. Gly357 contacts L-glutamine. Cys384 (nucleophile; for glutamine hydrolysis) is an active-site residue. L-glutamine is bound by residues Phe385–Gln388, Glu408, and Arg464. Active-site residues include His507 and Glu509.

Belongs to the CTP synthase family. Homotetramer.

The enzyme catalyses UTP + L-glutamine + ATP + H2O = CTP + L-glutamate + ADP + phosphate + 2 H(+). It catalyses the reaction L-glutamine + H2O = L-glutamate + NH4(+). It carries out the reaction UTP + NH4(+) + ATP = CTP + ADP + phosphate + 2 H(+). It participates in pyrimidine metabolism; CTP biosynthesis via de novo pathway; CTP from UDP: step 2/2. Its activity is regulated as follows. Allosterically activated by GTP, when glutamine is the substrate; GTP has no effect on the reaction when ammonia is the substrate. The allosteric effector GTP functions by stabilizing the protein conformation that binds the tetrahedral intermediate(s) formed during glutamine hydrolysis. Inhibited by the product CTP, via allosteric rather than competitive inhibition. Catalyzes the ATP-dependent amination of UTP to CTP with either L-glutamine or ammonia as the source of nitrogen. Regulates intracellular CTP levels through interactions with the four ribonucleotide triphosphates. The chain is CTP synthase from Methanothrix thermoacetophila (strain DSM 6194 / JCM 14653 / NBRC 101360 / PT) (Methanosaeta thermophila).